Here is a 274-residue protein sequence, read N- to C-terminus: NADPH-dependent 7-cyano-7-deazaguanine reductase (274 aa).

Residue 80–82 (VES) coordinates substrate. Residue 82 to 83 (SK) participates in NADPH binding. Cysteine 181 acts as the Thioimide intermediate in catalysis. Aspartate 188 (proton donor) is an active-site residue. Residue 220 to 221 (HE) participates in substrate binding. 249-250 (RG) contributes to the NADPH binding site.

The protein belongs to the GTP cyclohydrolase I family. QueF type 2 subfamily. In terms of assembly, homodimer.

The protein localises to the cytoplasm. It catalyses the reaction 7-aminomethyl-7-carbaguanine + 2 NADP(+) = 7-cyano-7-deazaguanine + 2 NADPH + 3 H(+). The protein operates within tRNA modification; tRNA-queuosine biosynthesis. In terms of biological role, catalyzes the NADPH-dependent reduction of 7-cyano-7-deazaguanine (preQ0) to 7-aminomethyl-7-deazaguanine (preQ1). The chain is NADPH-dependent 7-cyano-7-deazaguanine reductase from Paraburkholderia phytofirmans (strain DSM 17436 / LMG 22146 / PsJN) (Burkholderia phytofirmans).